We begin with the raw amino-acid sequence, 121 residues long: Large ribosomal subunit protein uL18 (121 aa).

It belongs to the universal ribosomal protein uL18 family. In terms of assembly, part of the 50S ribosomal subunit; part of the 5S rRNA/L5/L18/L25 subcomplex. Contacts the 5S and 23S rRNAs.

Functionally, this is one of the proteins that bind and probably mediate the attachment of the 5S RNA into the large ribosomal subunit, where it forms part of the central protuberance. The protein is Large ribosomal subunit protein uL18 of Paraburkholderia xenovorans (strain LB400).